The sequence spans 280 residues: Shikimate dehydrogenase (NADP(+)) (280 aa).

Shikimate-binding positions include 18 to 20 (SRS) and Thr65. Catalysis depends on Lys69, which acts as the Proton acceptor. Residues Asn90 and Asp105 each contribute to the shikimate site. NADP(+) contacts are provided by residues 131 to 135 (GAGGA), 154 to 159 (NRTRAR), and Ile219. Position 221 (Tyr221) interacts with shikimate. Gly242 contributes to the NADP(+) binding site.

This sequence belongs to the shikimate dehydrogenase family. In terms of assembly, homodimer.

The catalysed reaction is shikimate + NADP(+) = 3-dehydroshikimate + NADPH + H(+). It participates in metabolic intermediate biosynthesis; chorismate biosynthesis; chorismate from D-erythrose 4-phosphate and phosphoenolpyruvate: step 4/7. Involved in the biosynthesis of the chorismate, which leads to the biosynthesis of aromatic amino acids. Catalyzes the reversible NADPH linked reduction of 3-dehydroshikimate (DHSA) to yield shikimate (SA). In Methylocella silvestris (strain DSM 15510 / CIP 108128 / LMG 27833 / NCIMB 13906 / BL2), this protein is Shikimate dehydrogenase (NADP(+)).